The sequence spans 290 residues: Endo-1,4-beta-xylanase B (290 aa).

The first 19 residues, 1–19 (MVSFNSLLVAVSAATCALA), serve as a signal peptide directing secretion. N-linked (GlcNAc...) asparagine glycosylation is present at Asn-26. The GH11 domain occupies 34-222 (QSTPAGTGTN…SSGSSTVTVN (189 aa)). The active-site Nucleophile is Glu-118. The active-site Proton donor is the Glu-209. Residues 223–248 (PAGGVTSPIAPTGPSSVSTTPSGPSS) are disordered. Over residues 234–248 (TGPSSVSTTPSGPSS) the composition is skewed to low complexity. Residues 255–290 (TCSALYGQCGGQGWTGPTCCSSGTCKFSNNWYSQCL) form the CBM1 domain.

Belongs to the glycosyl hydrolase 11 (cellulase G) family.

The protein localises to the secreted. The enzyme catalyses Endohydrolysis of (1-&gt;4)-beta-D-xylosidic linkages in xylans.. The protein operates within glycan degradation; xylan degradation. Functionally, endo-1,4-beta-xylanase involved in the hydrolysis of xylan, a major structural heterogeneous polysaccharide found in plant biomass representing the second most abundant polysaccharide in the biosphere, after cellulose. In Phanerodontia chrysosporium (White-rot fungus), this protein is Endo-1,4-beta-xylanase B (xynB).